The sequence spans 128 residues: Large ribosomal subunit protein bL17 (128 aa).

The protein belongs to the bacterial ribosomal protein bL17 family. Part of the 50S ribosomal subunit. Contacts protein L32.

This Streptococcus agalactiae serotype Ia (strain ATCC 27591 / A909 / CDC SS700) protein is Large ribosomal subunit protein bL17.